We begin with the raw amino-acid sequence, 508 residues long: MGLPWYRVHTVVLNDPGRLIAVHLMHTALVSGWAGSMALYELAVFDPSDPVLDPMWRQGMFVIPFMTRLGITKSWGGWSITGETVTNAGIWSYEGVAAVHIVLSGLLFLAAIWHWVYWDLELFRDERTGKPSLDLPKIFGIHLFLSGVLCFGFGAFHVTGLFGPGIWVSDPYGLTGKVEPVAPAWGAEGFDPFVPGGIASHHIAAGILGILAGLFHLSVRPPQRLYKGLRMGNVETVLSSSIAAVFFAAFVVAGTMWYGSAATPIELFGPTRYQWDQGFFQQEIDRRIRSSKAENLSLSEAWSKIPEKLAFYDYIGNNPAKGGLFRAGAMDNGDGIAVGWLGHAVFKDKEGHELFVRRMPTFFETFPVVLVDEEGIVRADIPFRRAESKYSVEQVGVIVEFYGGELDGVSFSDPVTVKKYARRAQLGEIFEFDRATLKSDGVFRSSPRGWFTFGHATFALLFFFGHIWHGARTLFRDVFAGIDSDLDAQVEFGAFEKLGDPTTKRQVV.

Transmembrane regions (helical) follow at residues 21–36, 101–115, 140–156, 203–218, 237–252, and 457–472; these read AVHL…WAGS, IVLS…IWHW, GIHL…FGAF, IAAG…FHLS, VLSS…AFVV, and TFAL…HGAR.

The protein belongs to the PsbB/PsbC family. PsbB subfamily. In terms of assembly, PSII is composed of 1 copy each of membrane proteins PsbA, PsbB, PsbC, PsbD, PsbE, PsbF, PsbH, PsbI, PsbJ, PsbK, PsbL, PsbM, PsbT, PsbX, PsbY, PsbZ, Psb30/Ycf12, at least 3 peripheral proteins of the oxygen-evolving complex and a large number of cofactors. It forms dimeric complexes. The cofactor is Binds multiple chlorophylls. PSII binds additional chlorophylls, carotenoids and specific lipids..

The protein localises to the plastid. It localises to the chloroplast thylakoid membrane. Its function is as follows. One of the components of the core complex of photosystem II (PSII). It binds chlorophyll and helps catalyze the primary light-induced photochemical processes of PSII. PSII is a light-driven water:plastoquinone oxidoreductase, using light energy to abstract electrons from H(2)O, generating O(2) and a proton gradient subsequently used for ATP formation. This Anthoceros angustus (Hornwort) protein is Photosystem II CP47 reaction center protein.